We begin with the raw amino-acid sequence, 311 residues long: Porphobilinogen deaminase (311 aa).

Cysteine 243 carries the S-(dipyrrolylmethanemethyl)cysteine modification.

Belongs to the HMBS family. In terms of assembly, monomer. It depends on dipyrromethane as a cofactor.

It carries out the reaction 4 porphobilinogen + H2O = hydroxymethylbilane + 4 NH4(+). It functions in the pathway porphyrin-containing compound metabolism; protoporphyrin-IX biosynthesis; coproporphyrinogen-III from 5-aminolevulinate: step 2/4. Its function is as follows. Tetrapolymerization of the monopyrrole PBG into the hydroxymethylbilane pre-uroporphyrinogen in several discrete steps. This Aliivibrio salmonicida (strain LFI1238) (Vibrio salmonicida (strain LFI1238)) protein is Porphobilinogen deaminase.